A 1529-amino-acid polypeptide reads, in one-letter code: Protein STU1 (1529 aa).

Disordered regions lie at residues Ser-266–Ile-314, Lys-617–Ala-638, Lys-651–Ile-745, and Ser-1070–Ile-1090. The segment covering Thr-273–Ser-290 has biased composition (low complexity). Composition is skewed to polar residues over residues Arg-295–Ser-308 and Arg-619–Thr-634. The span at Thr-660 to Ser-674 shows a compositional bias: low complexity. The segment covering Thr-708–Ala-723 has biased composition (polar residues).

The protein belongs to the CLASP family. In terms of assembly, interacts with microtubules.

The protein localises to the cytoplasm. It is found in the cytoskeleton. It localises to the nucleus. Its subcellular location is the spindle. In terms of biological role, microtubule binding protein that promotes the stabilization of dynamic microtubules. Required for mitotic spindle formation. This chain is Protein STU1 (STU1), found in Debaryomyces hansenii (strain ATCC 36239 / CBS 767 / BCRC 21394 / JCM 1990 / NBRC 0083 / IGC 2968) (Yeast).